The chain runs to 486 residues: Protein DETOXIFICATION 27 (486 aa).

A disordered region spans residues 1 to 25 (MRGGDGEEGSESRVALLKSPHTAEE). 12 helical membrane-spanning segments follow: residues 41–61 (LWQI…MLVI), 74–94 (LAAI…LLLG), 124–144 (IVLF…TPVL), 153–173 (IAEL…AFTL), 189–209 (VTAY…WLFV), 216–236 (VVGT…ILLV), 269–289 (GVML…TGNL), 299–319 (LSIC…FFAG), 349–369 (IIGL…AWIF), 384–404 (LLLA…GVAV), 407–427 (GWQS…GVPL), and 439–461 (VMGI…LSFI).

Belongs to the multi antimicrobial extrusion (MATE) (TC 2.A.66.1) family.

It localises to the membrane. The protein is Protein DETOXIFICATION 27 of Arabidopsis thaliana (Mouse-ear cress).